A 367-amino-acid chain; its full sequence is Leu/Ile/Val-binding protein (367 aa).

Positions 1 to 23 (MNIKGKALLAGCIALAFSNMALA) are cleaved as a signal peptide. Cysteine 76 and cysteine 101 form a disulfide bridge.

It belongs to the leucine-binding protein family.

Its subcellular location is the periplasm. This protein is a component of the leucine, isoleucine, valine, (threonine) transport system, which is one of the two periplasmic binding protein-dependent transport systems of the high-affinity transport of the branched-chain amino acids. This is Leu/Ile/Val-binding protein (livJ) from Escherichia coli O157:H7.